A 301-amino-acid polypeptide reads, in one-letter code: GTP cyclohydrolase FolE2 (301 aa).

It belongs to the GTP cyclohydrolase IV family.

It carries out the reaction GTP + H2O = 7,8-dihydroneopterin 3'-triphosphate + formate + H(+). Its pathway is cofactor biosynthesis; 7,8-dihydroneopterin triphosphate biosynthesis; 7,8-dihydroneopterin triphosphate from GTP: step 1/1. Its function is as follows. Converts GTP to 7,8-dihydroneopterin triphosphate. This chain is GTP cyclohydrolase FolE2, found in Pseudomonas savastanoi pv. phaseolicola (strain 1448A / Race 6) (Pseudomonas syringae pv. phaseolicola (strain 1448A / Race 6)).